Here is a 502-residue protein sequence, read N- to C-terminus: MEFSVKSGSPEKQRSACIVVGVYEPRRLSGIAEQLDKISEGYISNLLRRGDLEGKPGQMLLLHHVPNVLSERVLLVGCGKERELDERQYKQIITKTINTLNETGSMEAVCFLTELHVKGRDTYWKVREAVESTQNSLYSFDALKTRKGETRRPLRKLVFNVPTRRELTVGERAIEHGMAVSAGMHLCRDVANMPPNICNPAYLASQARQIAENTENLTVTTVGEEQMEKLGMNSYLAVGRGSDNESVMTIMEYKGAVDNTQKPIVLIGKGLTFDSGGISLKPGEGMDEMKYDMGGAAGVIGAMKALCDMQLPINVIGVLAGCENMPSSNAYRPGDILTTMSGQTVEVLNTDAEGRLVLCDVLTYVERFDPELVVDTATLTGACVIALGKHASGLFSGHNPLAHELLNAGEQSGDRAWRMPLWDEYQEHLESPFADMTNLGGRPAGSITAACFLSRFAKKYNWAHLDVAGTAWNSGANKGSTGRPVPLLTQFLINRAGVDQGE.

Residues lysine 269 and aspartate 274 each coordinate Mn(2+). Lysine 281 is an active-site residue. 3 residues coordinate Mn(2+): aspartate 292, aspartate 351, and glutamate 353. Arginine 355 is an active-site residue.

It belongs to the peptidase M17 family. The cofactor is Mn(2+).

The protein localises to the cytoplasm. The enzyme catalyses Release of an N-terminal amino acid, Xaa-|-Yaa-, in which Xaa is preferably Leu, but may be other amino acids including Pro although not Arg or Lys, and Yaa may be Pro. Amino acid amides and methyl esters are also readily hydrolyzed, but rates on arylamides are exceedingly low.. It carries out the reaction Release of an N-terminal amino acid, preferentially leucine, but not glutamic or aspartic acids.. Its function is as follows. Presumably involved in the processing and regular turnover of intracellular proteins. Catalyzes the removal of unsubstituted N-terminal amino acids from various peptides. The chain is Probable cytosol aminopeptidase from Shewanella piezotolerans (strain WP3 / JCM 13877).